The sequence spans 390 residues: MNLHEYQSKHLLKKYNIPVPASEVVFNPDAAVDAAAKIGGDRWVVKAQVHAGGRGKAGGVRLVKNKEELKSAVKALLGTRLVTYQTDERGQPVNQILVEQTSDIARELYLGAVIDRASQRIVFMASTEGGVEIEKVAEKSPEKILKVTVDPAIGLQPFQCRQLFFGLGLQDLKQMRSFTDIVMGLYRLFTERDLSLLEINPLVITGSGELICLDAKINIDDSALYRQSELREMRDTTQEDEHETMAQQWELNYIKLDGNIGCMVNGAGLAMATMDLIKLSGGDPANFLDVGGSATKERVTEAFKIIASDKNVKGILVNIFGGIVRCDLIADGIISAVKEVGIDVPVVVRLEGNNAQLGAKKLADSGMNIIAAKGFADAAEQIVKQVGVIA.

The region spanning 9-245 (KHLLKKYNIP…TTQEDEHETM (237 aa)) is the ATP-grasp domain. Residues Lys46, 53–55 (GRG), Glu99, Ser102, and Glu107 each bind ATP. Residues Asn200 and Asp214 each coordinate Mg(2+). Residues Asn265 and 322-324 (GIV) each bind substrate.

It belongs to the succinate/malate CoA ligase beta subunit family. Heterotetramer of two alpha and two beta subunits. Requires Mg(2+) as cofactor.

It carries out the reaction succinate + ATP + CoA = succinyl-CoA + ADP + phosphate. The catalysed reaction is GTP + succinate + CoA = succinyl-CoA + GDP + phosphate. It participates in carbohydrate metabolism; tricarboxylic acid cycle; succinate from succinyl-CoA (ligase route): step 1/1. In terms of biological role, succinyl-CoA synthetase functions in the citric acid cycle (TCA), coupling the hydrolysis of succinyl-CoA to the synthesis of either ATP or GTP and thus represents the only step of substrate-level phosphorylation in the TCA. The beta subunit provides nucleotide specificity of the enzyme and binds the substrate succinate, while the binding sites for coenzyme A and phosphate are found in the alpha subunit. In Coxiella burnetii (strain CbuK_Q154) (Coxiella burnetii (strain Q154)), this protein is Succinate--CoA ligase [ADP-forming] subunit beta.